A 246-amino-acid chain; its full sequence is Carbonic anhydrase (246 aa).

A signal peptide spans 1–22; that stretch reads MKTSLGKAALLALSMMPVTVFA. In terms of domain architecture, Alpha-carbonic anhydrase spans 23–246; the sequence is SHWSYEGEGS…QPLNGRVVIE (224 aa). Residues cysteine 46 and cysteine 201 are joined by a disulfide bond. Histidine 84 serves as the catalytic Proton acceptor. Residues histidine 111, histidine 113, and histidine 130 each contribute to the Zn(2+) site. 197–198 serves as a coordination point for substrate; it reads TT.

This sequence belongs to the alpha-carbonic anhydrase family. The cofactor is Zn(2+).

It localises to the periplasm. The enzyme catalyses hydrogencarbonate + H(+) = CO2 + H2O. Functionally, reversible hydration of carbon dioxide. The chain is Carbonic anhydrase (cah) from Klebsiella pneumoniae.